A 207-amino-acid polypeptide reads, in one-letter code: Adenylyl-sulfate kinase (207 aa).

ATP is bound at residue 34-41 (GLSGSGKS). Ser108 (phosphoserine intermediate) is an active-site residue.

It belongs to the APS kinase family.

It catalyses the reaction adenosine 5'-phosphosulfate + ATP = 3'-phosphoadenylyl sulfate + ADP + H(+). The protein operates within sulfur metabolism; hydrogen sulfide biosynthesis; sulfite from sulfate: step 2/3. Functionally, catalyzes the synthesis of activated sulfate. The chain is Adenylyl-sulfate kinase from Lactiplantibacillus plantarum (strain ATCC BAA-793 / NCIMB 8826 / WCFS1) (Lactobacillus plantarum).